The following is a 272-amino-acid chain: S-adenosylmethionine decarboxylase proenzyme (272 aa).

The active-site Schiff-base intermediate with substrate; via pyruvic acid is the Ser122. Ser122 carries the pyruvic acid (Ser); by autocatalysis modification. His127 serves as the catalytic Proton acceptor; for processing activity. Cys150 functions as the Proton donor; for catalytic activity in the catalytic mechanism.

This sequence belongs to the prokaryotic AdoMetDC family. Type 2 subfamily. Heterooctamer of four alpha and four beta chains arranged as a tetramer of alpha/beta heterodimers. It depends on pyruvate as a cofactor. Post-translationally, is synthesized initially as an inactive proenzyme. Formation of the active enzyme involves a self-maturation process in which the active site pyruvoyl group is generated from an internal serine residue via an autocatalytic post-translational modification. Two non-identical subunits are generated from the proenzyme in this reaction, and the pyruvate is formed at the N-terminus of the alpha chain, which is derived from the carboxyl end of the proenzyme. The post-translation cleavage follows an unusual pathway, termed non-hydrolytic serinolysis, in which the side chain hydroxyl group of the serine supplies its oxygen atom to form the C-terminus of the beta chain, while the remainder of the serine residue undergoes an oxidative deamination to produce ammonia and the pyruvoyl group blocking the N-terminus of the alpha chain.

It carries out the reaction S-adenosyl-L-methionine + H(+) = S-adenosyl 3-(methylsulfanyl)propylamine + CO2. It functions in the pathway amine and polyamine biosynthesis; S-adenosylmethioninamine biosynthesis; S-adenosylmethioninamine from S-adenosyl-L-methionine: step 1/1. Catalyzes the decarboxylation of S-adenosylmethionine to S-adenosylmethioninamine (dcAdoMet), the propylamine donor required for the synthesis of the polyamines spermine and spermidine from the diamine putrescine. In Clostridium botulinum (strain Eklund 17B / Type B), this protein is S-adenosylmethionine decarboxylase proenzyme.